The chain runs to 155 residues: Short-chain-enoyl-CoA hydratase (155 aa).

The protein belongs to the enoyl-CoA hydratase/isomerase family.

The enzyme catalyses a short-chain (3S)-3-hydroxyacyl-CoA = a short-chain (2E)-enoyl-CoA + H2O. Its pathway is lipid metabolism; butanoate metabolism. The sequence is that of Short-chain-enoyl-CoA hydratase (crt) from Clostridioides difficile (Peptoclostridium difficile).